A 336-amino-acid chain; its full sequence is UDP-N-acetylglucosamine--N-acetylmuramyl-(pentapeptide) pyrophosphoryl-undecaprenol N-acetylglucosamine transferase (336 aa).

UDP-N-acetyl-alpha-D-glucosamine is bound by residues 10–12, asparagine 124, arginine 157, serine 179, and glutamine 277; that span reads TGG.

Belongs to the glycosyltransferase 28 family. MurG subfamily.

It localises to the cell inner membrane. The enzyme catalyses di-trans,octa-cis-undecaprenyl diphospho-N-acetyl-alpha-D-muramoyl-L-alanyl-D-glutamyl-meso-2,6-diaminopimeloyl-D-alanyl-D-alanine + UDP-N-acetyl-alpha-D-glucosamine = di-trans,octa-cis-undecaprenyl diphospho-[N-acetyl-alpha-D-glucosaminyl-(1-&gt;4)]-N-acetyl-alpha-D-muramoyl-L-alanyl-D-glutamyl-meso-2,6-diaminopimeloyl-D-alanyl-D-alanine + UDP + H(+). It participates in cell wall biogenesis; peptidoglycan biosynthesis. Cell wall formation. Catalyzes the transfer of a GlcNAc subunit on undecaprenyl-pyrophosphoryl-MurNAc-pentapeptide (lipid intermediate I) to form undecaprenyl-pyrophosphoryl-MurNAc-(pentapeptide)GlcNAc (lipid intermediate II). This is UDP-N-acetylglucosamine--N-acetylmuramyl-(pentapeptide) pyrophosphoryl-undecaprenol N-acetylglucosamine transferase from Wolinella succinogenes (strain ATCC 29543 / DSM 1740 / CCUG 13145 / JCM 31913 / LMG 7466 / NCTC 11488 / FDC 602W) (Vibrio succinogenes).